The following is a 1342-amino-acid chain: DNA-directed RNA polymerase subunit beta (1342 aa).

It belongs to the RNA polymerase beta chain family. The RNAP catalytic core consists of 2 alpha, 1 beta, 1 beta' and 1 omega subunit. When a sigma factor is associated with the core the holoenzyme is formed, which can initiate transcription.

It carries out the reaction RNA(n) + a ribonucleoside 5'-triphosphate = RNA(n+1) + diphosphate. Functionally, DNA-dependent RNA polymerase catalyzes the transcription of DNA into RNA using the four ribonucleoside triphosphates as substrates. The protein is DNA-directed RNA polymerase subunit beta of Colwellia psychrerythraea (strain 34H / ATCC BAA-681) (Vibrio psychroerythus).